The primary structure comprises 1256 residues: Topoisomerase 1-associated factor 1 (1256 aa).

Acidic residues predominate over residues 26–38; the sequence is GFIVSDEENDNLE. Disordered stretches follow at residues 26–58, 695–725, 1052–1121, and 1176–1256; these read GFIV…VDEY, SKKK…RTHA, SGAE…EAFF, and SDGV…DEDE. Positions 39 to 53 are enriched in basic and acidic residues; the sequence is NENRNERDPDSRNQD. Over residues 1060-1086 the composition is skewed to basic residues; that stretch reads GKARKRGNKSSSTIKKKSLQSRSRRPP. 2 stretches are compositionally biased toward basic and acidic residues: residues 1097–1110 and 1179–1190; these read ELRK…FVHD and VDTHSHQDDKSQ. The span at 1194–1204 shows a compositional bias: acidic residues; it reads SENEDSSEEVS. The segment covering 1222–1231 has biased composition (low complexity); sequence DNNVSENYVS.

The protein belongs to the timeless family. Component of the fork protection complex (FPC) consisting of TOF1 and CSM3.

The protein resides in the nucleus. Functionally, forms a fork protection complex (FPC) with CSM3 and which is required for chromosome segregation during meiosis and DNA damage repair. FPC coordinates leading and lagging strand synthesis and moves with the replication fork. FPC stabilizes replication forks in a configuration that is recognized by replication checkpoint sensors. The sequence is that of Topoisomerase 1-associated factor 1 (TOF1) from Scheffersomyces stipitis (strain ATCC 58785 / CBS 6054 / NBRC 10063 / NRRL Y-11545) (Yeast).